The primary structure comprises 329 residues: Transcription factor MYB2 (329 aa).

HTH myb-type domains follow at residues 17–69 (GGDL…LNYL) and 70–124 (RPDL…QKHA). 2 consecutive DNA-binding regions (H-T-H motif) follow at residues 45 to 69 (WNSL…LNYL) and 97 to 120 (WSKI…RTRV). Low complexity-rich tracts occupy residues 155–166 (AAAGQQQQQEGG) and 217–235 (LSST…GAGA). 2 disordered regions span residues 155–189 (AAAG…PELP) and 206–242 (GAQS…WPTQ).

As to expression, highly expressed in leaves. Expressed in roots and shoots. Expressed at low levels in flowers.

Its subcellular location is the nucleus. Its function is as follows. Transcription factor involved in abiotic stress responses. Plays a regulatory role in tolerance to salt, cold, and drought stresses. Positively regulates the expression of genes involved in proline synthesis and transport, and genes involved in reactive oxygen species (ROS) scavenging such as peroxidase, superoxide dismutase and catalase during salt stress. Transactivates stress-related genes, including LEA3, RAB16A and DREB2A during salt stress. In Oryza sativa subsp. japonica (Rice), this protein is Transcription factor MYB2.